Reading from the N-terminus, the 127-residue chain is Phosphoribosyl-AMP cyclohydrolase (127 aa).

Aspartate 75 serves as a coordination point for Mg(2+). Cysteine 76 is a Zn(2+) binding site. Mg(2+)-binding residues include aspartate 77 and aspartate 79. 2 residues coordinate Zn(2+): cysteine 93 and cysteine 100.

The protein belongs to the PRA-CH family. Homodimer. It depends on Mg(2+) as a cofactor. The cofactor is Zn(2+).

The protein localises to the cytoplasm. The catalysed reaction is 1-(5-phospho-beta-D-ribosyl)-5'-AMP + H2O = 1-(5-phospho-beta-D-ribosyl)-5-[(5-phospho-beta-D-ribosylamino)methylideneamino]imidazole-4-carboxamide. Its pathway is amino-acid biosynthesis; L-histidine biosynthesis; L-histidine from 5-phospho-alpha-D-ribose 1-diphosphate: step 3/9. Its function is as follows. Catalyzes the hydrolysis of the adenine ring of phosphoribosyl-AMP. The protein is Phosphoribosyl-AMP cyclohydrolase of Desulfotalea psychrophila (strain LSv54 / DSM 12343).